A 702-amino-acid chain; its full sequence is 1,4-alpha-glucan-branching enzyme (702 aa).

Position 2 is an N-acetylalanine (Ala-2). Substrate is bound by residues 62 to 63 (NE) and 91 to 93 (WAP). A (1,4-alpha-D-glucosyl)n-binding site is contributed by Trp-107. 118 to 121 (EYGK) provides a ligand contact to substrate. Position 143 (Lys-143) interacts with (1,4-alpha-D-glucosyl)n. Phosphotyrosine is present on Tyr-173. Substrate is bound at residue 333–336 (EVLR). Asp-357 functions as the Nucleophile in the catalytic mechanism. The Proton donor role is filled by Glu-412.

The protein belongs to the glycosyl hydrolase 13 family. GlgB subfamily. In terms of assembly, monomer.

The enzyme catalyses Transfers a segment of a (1-&gt;4)-alpha-D-glucan chain to a primary hydroxy group in a similar glucan chain.. Its pathway is glycan biosynthesis; glycogen biosynthesis. In terms of biological role, glycogen-branching enzyme participates in the glycogen biosynthetic process along with glycogenin and glycogen synthase. Generates alpha-1,6-glucosidic branches from alpha-1,4-linked glucose chains, to increase solubility of the glycogen polymer. The sequence is that of 1,4-alpha-glucan-branching enzyme (Gbe1) from Mus musculus (Mouse).